The following is a 794-amino-acid chain: Protocadherin beta-6 (794 aa).

A signal peptide spans Met-1–Ser-27. The Extracellular portion of the chain corresponds to Glu-28–Leu-688. Cadherin domains follow at residues Val-34–Phe-132, Met-137–Phe-241, Tyr-246–Leu-345, Phe-350–Phe-449, and Tyr-454–Val-559. N-linked (GlcNAc...) asparagine glycosylation is present at Asn-46. Cys-95 and Cys-101 are joined by a disulfide. N-linked (GlcNAc...) asparagine glycosylation is present at Asn-183. An N-linked (GlcNAc...) asparagine glycan is attached at Asn-416. Asn-565 carries N-linked (GlcNAc...) asparagine glycosylation. The Cadherin 6 domain occupies Gly-566–Leu-669. A helical transmembrane segment spans residues Val-689–Val-709. Residues Arg-710 to Ser-794 are Cytoplasmic-facing. The segment at Pro-773–Ser-794 is disordered. Polar residues predominate over residues Thr-784–Ser-794.

As to quaternary structure, forms homodimers in trans (molecules expressed by two different cells). Forms promiscuous heterodimers in cis (at the plasma membrane of the same cell) with other protocadherins.

It is found in the cell membrane. Its function is as follows. Calcium-dependent cell-adhesion protein involved in cells self-recognition and non-self discrimination. Thereby, it is involved in the establishment and maintenance of specific neuronal connections in the brain. This Homo sapiens (Human) protein is Protocadherin beta-6.